Consider the following 667-residue polypeptide: MSQENSNVPALKRTESKYKIGRVKSLPTVQIDEKTGDSYIELAPRSEGKIYGCTTFQGNYKEEEKLGQGTFGEVYKGLHLQTQRKVAMKRIIVNQENDLFPITAQREITILKRLNHKNIIKLLEMVYDFPPESNNKDYAQFNQNNSANPPAVPKKFFYMILPYMVADLSGILHNPRIELKMADIKNMMKQILEGVNFIHCSKFMHRDIKTANLLIDHNGVLKLADFGLARQYYGSPPNIKFPGSAGSGAKYTSVVVTRWYRAPELVLGDKYYTTAVDIWGVGCVFAEFFEKKPILQGKTDIDQGHVIFKLMGTPDERTWELAKYLPGAELTKTEYKSTIDERFGKHLTPTGLSFLKGLLALDPYKRLTAMSAMKHPFFQEEPLAADRLTLPCEESHEADIKRYKEELHEAMSQKGPSAPPGHIKEATPSPAKFEKKSGIKREQPYQSNQKNDQYPIKRQKFNQNPSVPHPQPKANRYGGSSLPSGPKYGRYEGNNHSGSLRNRITPSNMGTHSNPRAENMGSKPYQSEGRYSSNEDRKNGYNRGYSSSVNSRYNNRAAFNETEDQSITTTTLNRYRHKGYHDNNQSQTRLQGHSSLPGKPTSKYNSTQTNIPYRRTEIPNPNEYNASKLGSQDTKKNDYPKHSETQKQQNNEEKKIHSEQKDIADLY.

Residues 60 to 378 (YKEEEKLGQG…AMSAMKHPFF (319 aa)) form the Protein kinase domain. ATP-binding positions include 66–74 (LGQGTFGEV) and lysine 89. Catalysis depends on aspartate 207, which acts as the Proton acceptor. A disordered region spans residues 408 to 667 (HEAMSQKGPS…SEQKDIADLY (260 aa)). The segment covering 432–443 (KFEKKSGIKREQ) has biased composition (basic and acidic residues). Residues 494-516 (NNHSGSLRNRITPSNMGTHSNPR) show a composition bias toward polar residues. Over residues 541–556 (YNRGYSSSVNSRYNNR) the composition is skewed to low complexity. Polar residues-rich tracts occupy residues 582–594 (DNNQ…QGHS), 602–611 (SKYNSTQTNI), and 622–632 (NEYNASKLGSQ). Basic and acidic residues predominate over residues 633–667 (DTKKNDYPKHSETQKQQNNEEKKIHSEQKDIADLY).

Belongs to the protein kinase superfamily. CMGC Ser/Thr protein kinase family. CDC2/CDKX subfamily.

It localises to the nucleus. The catalysed reaction is L-seryl-[protein] + ATP = O-phospho-L-seryl-[protein] + ADP + H(+). It catalyses the reaction L-threonyl-[protein] + ATP = O-phospho-L-threonyl-[protein] + ADP + H(+). The enzyme catalyses [DNA-directed RNA polymerase] + ATP = phospho-[DNA-directed RNA polymerase] + ADP + H(+). Serine/threonine-protein kinase involved in transcription regulation. Phosphorylates the UBC2/RAD6 ubiquitin-conjugating enzyme (E2), leading to monoubiquitination of histone H2B and the silencing of telomeric-associated genes. Also required for histone H3 methylation. Necessary for the recovery from pheromone-induced growth arrest in the cell cycle G1 phase. This chain is Serine/threonine-protein kinase BUR1 (BUR1), found in Candida glabrata (strain ATCC 2001 / BCRC 20586 / JCM 3761 / NBRC 0622 / NRRL Y-65 / CBS 138) (Yeast).